Consider the following 311-residue polypeptide: Aspartate carbamoyltransferase catalytic subunit (311 aa).

2 residues coordinate carbamoyl phosphate: Arg-55 and Thr-56. Residue Lys-85 coordinates L-aspartate. Residues Arg-106, His-135, and Gln-138 each contribute to the carbamoyl phosphate site. Residues Arg-168 and Arg-230 each contribute to the L-aspartate site. Positions 268 and 269 each coordinate carbamoyl phosphate.

This sequence belongs to the aspartate/ornithine carbamoyltransferase superfamily. ATCase family. As to quaternary structure, heterododecamer (2C3:3R2) of six catalytic PyrB chains organized as two trimers (C3), and six regulatory PyrI chains organized as three dimers (R2).

It catalyses the reaction carbamoyl phosphate + L-aspartate = N-carbamoyl-L-aspartate + phosphate + H(+). Its pathway is pyrimidine metabolism; UMP biosynthesis via de novo pathway; (S)-dihydroorotate from bicarbonate: step 2/3. In terms of biological role, catalyzes the condensation of carbamoyl phosphate and aspartate to form carbamoyl aspartate and inorganic phosphate, the committed step in the de novo pyrimidine nucleotide biosynthesis pathway. The chain is Aspartate carbamoyltransferase catalytic subunit from Klebsiella pneumoniae (strain 342).